The sequence spans 121 residues: SVIELGKMIVQLTNKTPASYVSYGCFCGGGDRGKPKDATDRCCFVHSCCYDTLPDCSPKTDQYKYKWENGEIICENSTSCKKRICECDKAVAICLRENLKTYNKKYKIYPNILCRGEPDKC.

Intrachain disulfides connect Cys-25-Cys-114, Cys-27-Cys-43, Cys-42-Cys-94, Cys-48-Cys-121, Cys-49-Cys-87, Cys-56-Cys-80, and Cys-74-Cys-85. The interval 104 to 116 (KKYKIYPNILCRG) is important for membrane-damaging activities in eukaryotes and bacteria; heparin-binding.

It belongs to the phospholipase A2 family. Group II subfamily. S49 sub-subfamily. In terms of assembly, monomer. Expressed by the venom gland.

The protein resides in the secreted. Snake venom phospholipase A2 homolog that lacks enzymatic activity. Shows high myotoxin activities and displays edema-inducing activities. Has cytotoxic activities against HUVEC cells (LC(50)=4.9 uL) and human lung adenocarcinoma A549 cells (LC(50)=3.5 uL). The protein is Phospholipase A2 homolog ECO_00035 of Echis coloratus (Carpet viper).